Consider the following 196-residue polypeptide: Pyridoxine/pyridoxamine 5'-phosphate oxidase (196 aa).

Residues 44-49 (RTVLLK), 59-60 (YT), R65, K66, and Q88 contribute to the FMN site. Residue K49 coordinates substrate. Residues Y106, R110, and S114 each coordinate substrate. FMN is bound by residues 123–124 (QS) and W169. Position 175 to 177 (175 to 177 (RLH)) interacts with substrate. R179 serves as a coordination point for FMN.

It belongs to the pyridoxamine 5'-phosphate oxidase family. Homodimer. FMN is required as a cofactor.

It carries out the reaction pyridoxamine 5'-phosphate + O2 + H2O = pyridoxal 5'-phosphate + H2O2 + NH4(+). It catalyses the reaction pyridoxine 5'-phosphate + O2 = pyridoxal 5'-phosphate + H2O2. It participates in cofactor metabolism; pyridoxal 5'-phosphate salvage; pyridoxal 5'-phosphate from pyridoxamine 5'-phosphate: step 1/1. Its pathway is cofactor metabolism; pyridoxal 5'-phosphate salvage; pyridoxal 5'-phosphate from pyridoxine 5'-phosphate: step 1/1. Its function is as follows. Catalyzes the oxidation of either pyridoxine 5'-phosphate (PNP) or pyridoxamine 5'-phosphate (PMP) into pyridoxal 5'-phosphate (PLP). This chain is Pyridoxine/pyridoxamine 5'-phosphate oxidase, found in Alkalilimnicola ehrlichii (strain ATCC BAA-1101 / DSM 17681 / MLHE-1).